The following is a 179-amino-acid chain: Inner membrane-spanning protein YciB (179 aa).

5 helical membrane-spanning segments follow: residues 22–42 (IYAA…YSWV), 50–70 (MALI…FFHN), 76–96 (WKVT…QWVM), 121–141 (LAWA…AFWL), and 149–169 (FKVF…GVYI).

It belongs to the YciB family.

It localises to the cell inner membrane. Functionally, plays a role in cell envelope biogenesis, maintenance of cell envelope integrity and membrane homeostasis. The protein is Inner membrane-spanning protein YciB of Salmonella dublin (strain CT_02021853).